The primary structure comprises 590 residues: Mannosyl-oligosaccharide 1,2-alpha-mannosidase mans-2 (590 aa).

The Cytoplasmic segment spans residues M1 to Q9. A helical; Signal-anchor for type II membrane protein membrane pass occupies residues A10 to A30. Residues S31–N590 lie on the Lumenal side of the membrane. Over residues P88 to T102 the composition is skewed to basic and acidic residues. Residues P88 to A112 form a disordered region. 4 N-linked (GlcNAc...) asparagine glycosylation sites follow: N156, N212, N373, and N402. A disulfide bond links C423 and C456. E470 acts as the Proton donor in catalysis. T580 contacts Ca(2+).

The protein belongs to the glycosyl hydrolase 47 family. The cofactor is Ca(2+).

The protein localises to the membrane. It carries out the reaction N(4)-(alpha-D-Man-(1-&gt;2)-alpha-D-Man-(1-&gt;2)-alpha-D-Man-(1-&gt;3)-[alpha-D-Man-(1-&gt;2)-alpha-D-Man-(1-&gt;3)-[alpha-D-Man-(1-&gt;2)-alpha-D-Man-(1-&gt;6)]-alpha-D-Man-(1-&gt;6)]-beta-D-Man-(1-&gt;4)-beta-D-GlcNAc-(1-&gt;4)-beta-D-GlcNAc)-L-asparaginyl-[protein] (N-glucan mannose isomer 9A1,2,3B1,2,3) + 4 H2O = N(4)-(alpha-D-Man-(1-&gt;3)-[alpha-D-Man-(1-&gt;3)-[alpha-D-Man-(1-&gt;6)]-alpha-D-Man-(1-&gt;6)]-beta-D-Man-(1-&gt;4)-beta-D-GlcNAc-(1-&gt;4)-beta-D-GlcNAc)-L-asparaginyl-[protein] (N-glucan mannose isomer 5A1,2) + 4 beta-D-mannose. The catalysed reaction is N(4)-(alpha-D-Man-(1-&gt;2)-alpha-D-Man-(1-&gt;2)-alpha-D-Man-(1-&gt;3)-[alpha-D-Man-(1-&gt;3)-[alpha-D-Man-(1-&gt;2)-alpha-D-Man-(1-&gt;6)]-alpha-D-Man-(1-&gt;6)]-beta-D-Man-(1-&gt;4)-beta-D-GlcNAc-(1-&gt;4)-beta-D-GlcNAc)-L-asparaginyl-[protein] (N-glucan mannose isomer 8A1,2,3B1,3) + 3 H2O = N(4)-(alpha-D-Man-(1-&gt;3)-[alpha-D-Man-(1-&gt;3)-[alpha-D-Man-(1-&gt;6)]-alpha-D-Man-(1-&gt;6)]-beta-D-Man-(1-&gt;4)-beta-D-GlcNAc-(1-&gt;4)-beta-D-GlcNAc)-L-asparaginyl-[protein] (N-glucan mannose isomer 5A1,2) + 3 beta-D-mannose. It participates in protein modification; protein glycosylation. Its function is as follows. Involved in the maturation of Asn-linked oligosaccharides. Progressively trim alpha-1,2-linked mannose residues from Man(9)GlcNAc(2) to produce Man(5)GlcNAc(2). The polypeptide is Mannosyl-oligosaccharide 1,2-alpha-mannosidase mans-2 (Caenorhabditis elegans).